A 26-amino-acid chain; its full sequence is M-poneritoxin-Ng1c (26 aa).

Expressed by the venom gland.

It is found in the secreted. It localises to the target cell membrane. Functionally, has a broad spectrum of activity against both Gram-positive and Gram-negative bacteria and S.cerevisiae. Has insecticidal and hemolytic activities. May act by disrupting the integrity of the bacterial cell membrane. This is M-poneritoxin-Ng1c from Neoponera goeldii (Ponerine ant).